The chain runs to 266 residues: Blue copper protein (266 aa).

The first 24 residues, 1-24 (MAYSKILFCFMIGFVGFLPAITMA), serve as a signal peptide directing secretion. 3 Phytocyanin domains span residues 25-56 (TQYL…GDTL), 57-102 (APPP…TVED), and 116-216 (TEYW…TVEG). Residue Asn47 is glycosylated (N-linked (GlcNAc...) asparagine). A Cu cation-binding site is contributed by His156. Residue Asn162 is glycosylated (N-linked (GlcNAc...) asparagine). Residues Cys169 and Cys203 are joined by a disulfide bond. The Cu cation site is built by Cys197, His202, and Gln208. Residues 245–265 (ITSPYKMFVGGAVSIWTILTL) form a helical membrane-spanning segment.

Its subcellular location is the membrane. The protein is Blue copper protein of Petunia hybrida (Petunia).